Here is a 143-residue protein sequence, read N- to C-terminus: Large ribosomal subunit protein uL15 (143 aa).

The tract at residues 1 to 52 (MKLNTLAPAAGSKSAPKRLGRGIGSGLGKTSGKGHKGQKARSGGYHKVGFEG) is disordered. The span at 21–31 (RGIGSGLGKTS) shows a compositional bias: gly residues.

Belongs to the universal ribosomal protein uL15 family. Part of the 50S ribosomal subunit.

Its function is as follows. Binds to the 23S rRNA. In Francisella tularensis subsp. holarctica (strain FTNF002-00 / FTA), this protein is Large ribosomal subunit protein uL15.